A 403-amino-acid chain; its full sequence is N-isopropylammelide isopropyl amidohydrolase (403 aa).

Zn(2+)-binding residues include His-60, His-62, and His-217. His-249 acts as the Proton donor/acceptor in catalysis. Asp-303 serves as a coordination point for Zn(2+).

The protein belongs to the metallo-dependent hydrolases superfamily. N-acyl-D-amino-acid deacylase family. Homotetramer. The cofactor is Zn(2+).

It localises to the cytoplasm. The enzyme catalyses N-isopropylammelide + H2O + H(+) = isopropylamine + cyanurate. Its pathway is xenobiotic degradation; atrazine degradation; cyanurate from atrazine: step 3/3. Inhibited by N-ethylammeline, N-hydroxyethylammeline, N-isopropylammeline, ammeline and 2-amino-4hydroxy-1,3,5-s-triazine. In terms of biological role, transforms N-isopropylammelide to cyanuric acid and isopropylamine. This chain is N-isopropylammelide isopropyl amidohydrolase (atzC), found in Pseudomonas sp. (strain ADP).